The sequence spans 329 residues: Flotillin-like protein FloA (329 aa).

The next 2 membrane-spanning stretches (helical) occupy residues F4–F24 and V27–G47.

This sequence belongs to the flotillin-like FloA family. As to quaternary structure, homooligomerizes.

It localises to the cell membrane. Its subcellular location is the membrane raft. Functionally, found in functional membrane microdomains (FMM) that may be equivalent to eukaryotic membrane rafts. FMMs are highly dynamic and increase in number as cells age. Flotillins are thought to be important factors in membrane fluidity. This is Flotillin-like protein FloA from Alkaliphilus metalliredigens (strain QYMF).